We begin with the raw amino-acid sequence, 196 residues long: ECF RNA polymerase sigma factor SigM (196 aa).

The interval 39-105 is sigma-70 factor domain-2; it reads LFRRHHRQLH…ACLDRLRRAK (67 aa). Residues 63–66 carry the Polymerase core binding motif; the sequence is DALQ. Residues 130–181 are sigma-70 factor domain-4; the sequence is AVQRALMRLPVEQRAAVVAVDMQGYSIADTARMLGVAEGTVKSRCARARARL. The H-T-H motif DNA-binding region spans 156-175; that stretch reads IADTARMLGVAEGTVKSRCA.

It belongs to the sigma-70 factor family. ECF subfamily. As to quaternary structure, interacts transiently with the RNA polymerase catalytic core formed by RpoA, RpoB, RpoC and RpoZ (2 alpha, 1 beta, 1 beta' and 1 omega subunit) to form the RNA polymerase holoenzyme that can initiate transcription. Interacts (via sigma-70 factor domain-4) with anti-sigma-M factor RsmA (AC L7N5D7).

In terms of biological role, sigma factors are initiation factors that promote the attachment of RNA polymerase to specific initiation sites and are then released. Extracytoplasmic function (ECF) sigma factors are held in an inactive form by an anti-sigma factor (RsaM, AC L7N5D7) until released by regulated intramembrane proteolysis. This sigma factor is required for the synthesis of surface or secreted molecules. The sequence is that of ECF RNA polymerase sigma factor SigM (sigM) from Mycobacterium tuberculosis (strain ATCC 25618 / H37Rv).